Reading from the N-terminus, the 628-residue chain is Chaperone protein HtpG (628 aa).

Residues 1 to 333 are a; substrate-binding; sequence MTTDTKATET…SADLPLNVSR (333 aa). The b stretch occupies residues 334–549; it reads EMIQESPLLA…EHGPDRQFER (216 aa). The tract at residues 550-628 is c; the sequence is LMNAAGRLDK…RLIARGIAKG (79 aa).

It belongs to the heat shock protein 90 family. As to quaternary structure, homodimer.

It localises to the cytoplasm. Functionally, molecular chaperone. Has ATPase activity. The chain is Chaperone protein HtpG from Mesorhizobium japonicum (strain LMG 29417 / CECT 9101 / MAFF 303099) (Mesorhizobium loti (strain MAFF 303099)).